Reading from the N-terminus, the 86-residue chain is Small ribosomal subunit protein bS20 (86 aa).

Positions 1–11 (MANIKSQKKRV) are enriched in basic residues. A disordered region spans residues 1 to 20 (MANIKSQKKRVRTNEKAHQR).

The protein belongs to the bacterial ribosomal protein bS20 family.

Functionally, binds directly to 16S ribosomal RNA. The protein is Small ribosomal subunit protein bS20 of Bifidobacterium animalis subsp. lactis (strain AD011).